A 715-amino-acid polypeptide reads, in one-letter code: MTTTSAFMLNVRLDNVAVVAIDVPGEKVNTLKAEFAAQVRAILKQIRENKALQGVVFISAKADNFIAGADINMIGHCQNAQEAETLARQGQQLMAEIQALPVPVIAAIHGACLGGGLEMALACHRRICTDDVKTVLGLPEVQLGLLPGSGGTQRLPRLVGVSTALDMILTGKQLRARQALKAGLVDDVVPQTILLEAAVELAKKERLAQRTLPVRERILAGPLGRALLFRLVRKKTAQKTQGNYPATERIIDVIETGLAQGSSSGYDAEARAFGELAMTPQSQALRAVFFASTEVKKDPGSDAPPGPLNSVGILGGGLMGGGIAWVTACKGGLPVRIKDINTQGINHALKYSWDLLETKVRRRHIKANERDKQLALISGSTDYRGFSHRDLVIEAVFEDLPLKQQMVAEVEQNCAAHTIFASNTSSLPIGDIAANAARPEQVIGLHFFSPVEKMPLVEVIPHASTSAQTIATTVKLAKKQGKTPIVVSDKAGFYVNRILVPYINEAIRMLTEGERVEHIDAALVKFGFPVGPIQLLDEVGIDTGTKIIPVLEAAYGERFSAPANVVASILNDDRKGRKNGRGFYLYGEKGRKSKKQVDPAIYKLIGVQGQSRLSAQQVAERCVMLMLNEAARCFDEKVIRSARDGDIGAVFGIGFPPFLGGPFRYMDALGPGEMVATLQRLAALYGPRYAPCEQLVRMAERREHFWTNGETDQGN.

The segment at 1–190 (MTTTSAFMLN…KAGLVDDVVP (190 aa)) is enoyl-CoA hydratase. Positions 306–715 (GPLNSVGILG…WTNGETDQGN (410 aa)) are 3-hydroxyacyl-CoA dehydrogenase.

The protein in the N-terminal section; belongs to the enoyl-CoA hydratase/isomerase family. In the central section; belongs to the 3-hydroxyacyl-CoA dehydrogenase family. In terms of assembly, heterotetramer of two alpha chains (FadJ) and two beta chains (FadI).

The protein localises to the cytoplasm. The catalysed reaction is a (3S)-3-hydroxyacyl-CoA = a (2E)-enoyl-CoA + H2O. It catalyses the reaction a 4-saturated-(3S)-3-hydroxyacyl-CoA = a (3E)-enoyl-CoA + H2O. The enzyme catalyses a (3S)-3-hydroxyacyl-CoA + NAD(+) = a 3-oxoacyl-CoA + NADH + H(+). It carries out the reaction (3S)-3-hydroxybutanoyl-CoA = (3R)-3-hydroxybutanoyl-CoA. The protein operates within lipid metabolism; fatty acid beta-oxidation. Functionally, catalyzes the formation of a hydroxyacyl-CoA by addition of water on enoyl-CoA. Also exhibits 3-hydroxyacyl-CoA epimerase and 3-hydroxyacyl-CoA dehydrogenase activities. This is Fatty acid oxidation complex subunit alpha from Salmonella dublin (strain CT_02021853).